We begin with the raw amino-acid sequence, 593 residues long: Cytochrome c oxidase polypeptide 1 (593 aa).

Helical transmembrane passes span 5–25 (ASSITLTVLMGVLLVGVVAVL) and 71–91 (IGILYGVYGTIAFAWGGVSVL). Histidine 117 provides a ligand contact to Fe(II)-heme a. 6 consecutive transmembrane segments (helical) span residues 122–142 (LFLFGTPMIAAFGNYFIPLLI), 154–174 (AIAFWLLPPGAILIWSGFLIP), 204–224 (GLHLTGVSATMGAINFIATIF), 246–266 (QSGLILFAFPLFGSALIMLLL), 288–308 (LFWFFGHPEVYVLVLPPMGIV), and 320–340 (LFGFKFVVYSTLAIGVLSFGV). Histidine 294 and tyrosine 298 together coordinate Cu cation. The segment at residues 294–298 (HPEVY) is a cross-link (1'-histidyl-3'-tyrosine (His-Tyr)). Cu cation contacts are provided by histidine 343 and histidine 344. 5 consecutive transmembrane segments (helical) span residues 358–378 (FMAVSLAISIPSAVKVFNWIT), 401–421 (FIIGGVTGVFLAVIPIDLILH), 425–445 (YVVGHFHFIVYGAIGFALFAA), 467–487 (FWTALVGSNATFLAMLWLGYG), and 506–526 (LATVGAFLIGVSTLIWLFNMA). Histidine 429 lines the heme a3 pocket. Histidine 431 is a Fe(II)-heme a binding site. The segment at 562-593 (TTVLPDGGDEAQSEADAVTDGGQPAADSDTES) is disordered.

This sequence belongs to the heme-copper respiratory oxidase family.

The protein resides in the cell membrane. It carries out the reaction 4 Fe(II)-[cytochrome c] + O2 + 8 H(+)(in) = 4 Fe(III)-[cytochrome c] + 2 H2O + 4 H(+)(out). Its pathway is energy metabolism; oxidative phosphorylation. Functionally, cytochrome c oxidase is the component of the respiratory chain that catalyzes the reduction of oxygen to water. Subunits 1-3 form the functional core of the enzyme complex. CO I is the catalytic subunit of the enzyme. Electrons originating in cytochrome c are transferred via the copper A center of subunit 2 and heme A of subunit 1 to the bimetallic center formed by heme A3 and copper B. This chain is Cytochrome c oxidase polypeptide 1 (coxA2), found in Halobacterium salinarum (strain ATCC 700922 / JCM 11081 / NRC-1) (Halobacterium halobium).